The chain runs to 483 residues: Sodium/pantothenate symporter (483 aa).

The Periplasmic portion of the chain corresponds to 1 to 2 (MQ). A helical transmembrane segment spans residues 3–23 (LEVILPLVAYLVVVFGISVYA). Residues 24 to 42 (MRKRSTGTFLNEYFLGSRS) are Cytoplasmic-facing. Residues 43 to 63 (MGGIVLAMTLTATYISASSFI) traverse the membrane as a helical segment. Residues 64 to 73 (GGPGAAYKYG) are Periplasmic-facing. The helical transmembrane segment at 74–94 (LGWVLLAMIQLPAVWLSLGIL) threads the bilayer. The Cytoplasmic portion of the chain corresponds to 95-123 (GKKFAILARRYNAVTLNDMLFARYQSRLL). A helical membrane pass occupies residues 124 to 144 (VWLASLSLLVAFVGAMTVQFI). Over 145–157 (GGARLLETAAGIP) the chain is Periplasmic. Residues 158 to 178 (YETGLLIFGISIALYTAFGGF) traverse the membrane as a helical segment. Residues 179–189 (RASVLNDTMQG) lie on the Cytoplasmic side of the membrane. A helical membrane pass occupies residues 190 to 210 (LVMLIGTVVLLIGVVHAAGGL). Residues 211–232 (SNAVQTLQTIDPQLVTPQGADD) lie on the Periplasmic side of the membrane. A helical transmembrane segment spans residues 233 to 253 (ILSPAFMTSFWVLVCFGVIGL). The Cytoplasmic portion of the chain corresponds to 254–272 (PHTAVRCISYKDSKAVHRG). The helical transmembrane segment at 273–293 (IIIGTIVVAILMFGMHLAGAL) threads the bilayer. Residues 294–305 (GRAVIPDLTVPD) are Periplasmic-facing. The helical transmembrane segment at 306 to 326 (LVIPTLMVKVLPPFAAGIFLA) threads the bilayer. The Cytoplasmic portion of the chain corresponds to 327–368 (APMAAIMSTINAQLLQSSATIIKDLYLNIRPDQMQNETRLKR). A helical transmembrane segment spans residues 369-389 (MSAVITLVLGALLLLAAWKPP). Residues 390-391 (EM) lie on the Periplasmic side of the membrane. A helical membrane pass occupies residues 392–412 (IIWLNLLAFGGLEAVFLWPLV). Topologically, residues 413 to 423 (LGLYWERANAK) are cytoplasmic. Residues 424-444 (GALSAMIVGGVLYAVLATLNI) form a helical membrane-spanning segment. A topological domain (periplasmic) is located at residue glutamine 445. Residues 446–466 (YLGFHPIVPSLLLSLLAFLVG) traverse the membrane as a helical segment. The Cytoplasmic portion of the chain corresponds to 467 to 483 (NRFGTSVPQATVLTTDK).

It belongs to the sodium:solute symporter (SSF) (TC 2.A.21) family.

It localises to the cell inner membrane. The enzyme catalyses (R)-pantothenate(in) + Na(+)(in) = (R)-pantothenate(out) + Na(+)(out). With respect to regulation, pantothenate uptake is not reduced in osmotically shocked cells or by ATP depletion with arsenate, but is reduced greater than 90% by the dissipation of the membrane electrochemical gradient with 2,4-dinitrophenol. Functionally, catalyzes the sodium-dependent uptake of extracellular pantothenate. In Escherichia coli (strain K12), this protein is Sodium/pantothenate symporter.